The sequence spans 160 residues: ATP synthase subunit b (160 aa).

Residues 15–35 form a helical membrane-spanning segment; that stretch reads LVIVIGLLFWFLRGFLGGILE.

The protein belongs to the ATPase B chain family. In terms of assembly, F-type ATPases have 2 components, F(1) - the catalytic core - and F(0) - the membrane proton channel. F(1) has five subunits: alpha(3), beta(3), gamma(1), delta(1), epsilon(1). F(0) has four main subunits: a(1), b(1), b'(1) and c(10-14). The alpha and beta chains form an alternating ring which encloses part of the gamma chain. F(1) is attached to F(0) by a central stalk formed by the gamma and epsilon chains, while a peripheral stalk is formed by the delta, b and b' chains.

The protein resides in the cellular thylakoid membrane. Functionally, f(1)F(0) ATP synthase produces ATP from ADP in the presence of a proton or sodium gradient. F-type ATPases consist of two structural domains, F(1) containing the extramembraneous catalytic core and F(0) containing the membrane proton channel, linked together by a central stalk and a peripheral stalk. During catalysis, ATP synthesis in the catalytic domain of F(1) is coupled via a rotary mechanism of the central stalk subunits to proton translocation. In terms of biological role, component of the F(0) channel, it forms part of the peripheral stalk, linking F(1) to F(0). The protein is ATP synthase subunit b of Synechococcus sp. (strain CC9605).